The sequence spans 65 residues: Large ribosomal subunit protein bL35 (65 aa).

Residues 1–26 form a disordered region; the sequence is MPKIKTLRGAAKRFKKTASGGFKRKQ. The segment covering 10–26 has biased composition (basic residues); that stretch reads AAKRFKKTASGGFKRKQ.

The protein belongs to the bacterial ribosomal protein bL35 family.

This Histophilus somni (strain 2336) (Haemophilus somnus) protein is Large ribosomal subunit protein bL35.